The following is a 328-amino-acid chain: GMP reductase (328 aa).

Residue Cys-176 is the Thioimidate intermediate of the active site. 205–228 (IIADGGIRTHGDVAKSIRFGATMV) provides a ligand contact to NADP(+).

This sequence belongs to the IMPDH/GMPR family. GuaC type 2 subfamily.

It carries out the reaction IMP + NH4(+) + NADP(+) = GMP + NADPH + 2 H(+). Functionally, catalyzes the irreversible NADPH-dependent deamination of GMP to IMP. It functions in the conversion of nucleobase, nucleoside and nucleotide derivatives of G to A nucleotides, and in maintaining the intracellular balance of A and G nucleotides. The sequence is that of GMP reductase from Bacillus cereus (strain ATCC 14579 / DSM 31 / CCUG 7414 / JCM 2152 / NBRC 15305 / NCIMB 9373 / NCTC 2599 / NRRL B-3711).